We begin with the raw amino-acid sequence, 694 residues long: Ribonuclease R (694 aa).

An RNB domain is found at 204 to 525 (RKDLRDLLCF…IVHRLLFHPL (322 aa)). The S1 motif domain maps to 571–648 (ATLYKAFIIT…LTQSIEWTLV (78 aa)). Residues 652–694 (TKAKAKRTSKKKKTESVTTKEKKKSPAKKKKGATKTKKGSGKN) are disordered. 2 stretches are compositionally biased toward basic residues: residues 654-664 (AKAKRTSKKKK) and 672-694 (EKKK…SGKN).

Belongs to the RNR ribonuclease family. RNase R subfamily.

It localises to the cytoplasm. The catalysed reaction is Exonucleolytic cleavage in the 3'- to 5'-direction to yield nucleoside 5'-phosphates.. Its function is as follows. 3'-5' exoribonuclease that releases 5'-nucleoside monophosphates and is involved in maturation of structured RNAs. In Chlamydia trachomatis serovar D (strain ATCC VR-885 / DSM 19411 / UW-3/Cx), this protein is Ribonuclease R.